Here is a 356-residue protein sequence, read N- to C-terminus: Cyanuric acid amidohydrolase (356 aa).

The segment at 1–99 (MPIAKVHRIA…FLVFERAEGN (99 aa)) is RU A. Substrate is bound by residues Arg52 and 79 to 80 (SG). Residues 106-243 (ALAIGRAHTP…HEIVVLGMSE (138 aa)) form an RU B region. Lys156 is a catalytic residue. Residues Arg188 and 226 to 227 (SS) contribute to the substrate site. Catalysis depends on Ser226, which acts as the Nucleophile. The tract at residues 249–356 (LAIAHGVMAD…VAVIAARTMG (108 aa)) is RU C. Glu287 is a Mg(2+) binding site. Substrate-binding positions include Arg314 and 333 to 334 (SG). Residues Gly336, Gln339, Gly340, Pro341, and Gly344 each contribute to the Mg(2+) site.

It belongs to the cyclic amide hydrolase (CyAH) family. In terms of assembly, homotetramer.

It catalyses the reaction cyanurate + H2O = 1-carboxybiuret + H(+). It participates in xenobiotic degradation; atrazine degradation; biuret from cyanurate: step 1/1. With respect to regulation, inhibited by barbituric acid. In terms of biological role, responsible for the hydrolysis of cyanuric acid, an intermediate formed during catabolism of s-triazine based compounds in herbicides such as atrazine and polymers such as melamine. Catalyzes the hydrolytic opening of the s-triazine ring of cyanuric acid (2,4,6-trihydroxy-s-triazine) to yield carbon dioxide and carboxybiuret, which spontaneously decarboxylates to biuret. The sequence is that of Cyanuric acid amidohydrolase from Azorhizobium caulinodans (strain ATCC 43989 / DSM 5975 / JCM 20966 / LMG 6465 / NBRC 14845 / NCIMB 13405 / ORS 571).